The chain runs to 49 residues: Isoflavone reductase homolog 2 (49 aa).

An NADP(+)-binding site is contributed by 5–11 (GGTGYIG).

It belongs to the NmrA-type oxidoreductase family. Isoflavone reductase subfamily.

Its subcellular location is the cytoplasm. In Pseudotsuga menziesii (Douglas-fir), this protein is Isoflavone reductase homolog 2.